The sequence spans 129 residues: Small ribosomal subunit protein eS8 (129 aa).

The disordered stretch occupies residues 1–29; sequence MSVWQGRSRRKPTGGLYRPARKKRKYEMG.

Belongs to the eukaryotic ribosomal protein eS8 family. In terms of assembly, part of the 30S ribosomal subunit.

The protein is Small ribosomal subunit protein eS8 (rps8e) of Methanocaldococcus jannaschii (strain ATCC 43067 / DSM 2661 / JAL-1 / JCM 10045 / NBRC 100440) (Methanococcus jannaschii).